Consider the following 553-residue polypeptide: Formate--tetrahydrofolate ligase (553 aa).

ATP is bound at residue 63-70 (TPAGEGKT).

The protein belongs to the formate--tetrahydrofolate ligase family.

The catalysed reaction is (6S)-5,6,7,8-tetrahydrofolate + formate + ATP = (6R)-10-formyltetrahydrofolate + ADP + phosphate. It participates in one-carbon metabolism; tetrahydrofolate interconversion. The chain is Formate--tetrahydrofolate ligase from Oenococcus oeni (strain ATCC BAA-331 / PSU-1).